The following is a 333-amino-acid chain: Autoinducer 2 import system permease protein LsrD (333 aa).

The next 10 helical transmembrane spans lie at 7 to 27 (YGWE…FGIA), 45 to 65 (ICIG…GIDI), 70 to 90 (TIGL…PMAA), 91 to 111 (AIPL…ALIL), 118 to 138 (LVIT…LSGI), 162 to 182 (LFGL…CWLF), 212 to 232 (TLYL…IVLV), 240 to 260 (SDLG…GGAN), 261 to 281 (IYGG…IGYL), and 288 to 308 (AGVP…IAVV).

The protein belongs to the binding-protein-dependent transport system permease family. AraH/RbsC subfamily. As to quaternary structure, the complex is composed of two ATP-binding proteins (LsrA), two transmembrane proteins (LsrC and LsrD) and a solute-binding protein (LsrB).

The protein resides in the cell inner membrane. Functionally, part of the ABC transporter complex LsrABCD involved in autoinducer 2 (AI-2) import. Probably responsible for the translocation of the substrate across the membrane. The polypeptide is Autoinducer 2 import system permease protein LsrD (lsrD) (Photorhabdus laumondii subsp. laumondii (strain DSM 15139 / CIP 105565 / TT01) (Photorhabdus luminescens subsp. laumondii)).